The following is a 210-amino-acid chain: Cytochrome c4 (210 aa).

The N-terminal stretch at 1–20 (MNKALVTLLLTLGITGLAHA) is a signal peptide. 8 residues coordinate heme c: C34, C37, H38, M86, C139, C142, H143, and M187.

In terms of processing, binds 2 heme c groups covalently per subunit.

It localises to the periplasm. Diheme, high potential cytochrome c believed to be an intermediate electron donor to terminal oxidation systems. This Azotobacter vinelandii protein is Cytochrome c4 (cycA).